The sequence spans 145 residues: uncharacterized protein (145 aa).

Residues 1-49 (MLSIFKNLLGTSEEDGTTQEANSKDTKGLKEERKRKKRKNKYKIPPGHT) are disordered. Over residues 22–32 (NSKDTKGLKEE) the composition is skewed to basic and acidic residues. Basic residues predominate over residues 33–42 (RKRKKRKNKY). S68 is modified (phosphoserine). The Cytochrome b5 heme-binding domain occupies 69–145 (PISVTAEELA…LKTSFVGYLV (77 aa)). Residues H104 and H127 each coordinate heme.

Belongs to the cytochrome b5 family.

The protein localises to the cytoplasm. This is an uncharacterized protein from Schizosaccharomyces pombe (strain 972 / ATCC 24843) (Fission yeast).